We begin with the raw amino-acid sequence, 88 residues long: Small ribosomal subunit protein bS20 (88 aa).

The segment covering 1-11 (MANIKSSEKDI) has biased composition (basic and acidic residues). Disordered regions lie at residues 1-31 (MANI…LRTQ) and 69-88 (SKNA…SSAA).

The protein belongs to the bacterial ribosomal protein bS20 family.

Binds directly to 16S ribosomal RNA. The polypeptide is Small ribosomal subunit protein bS20 (Leptospira interrogans serogroup Icterohaemorrhagiae serovar copenhageni (strain Fiocruz L1-130)).